A 65-amino-acid chain; its full sequence is Large ribosomal subunit protein bL32 (65 aa).

Positions 1–19 (MAVQKSRKTPSKRGMRRSH) are enriched in basic residues. The disordered stretch occupies residues 1 to 32 (MAVQKSRKTPSKRGMRRSHNALTNPTLSEDQE).

This sequence belongs to the bacterial ribosomal protein bL32 family.

In Ruthia magnifica subsp. Calyptogena magnifica, this protein is Large ribosomal subunit protein bL32.